A 313-amino-acid chain; its full sequence is Pseudouridine kinase (313 aa).

This sequence belongs to the carbohydrate kinase PfkB family.

The catalysed reaction is pseudouridine + ATP = psi-UMP + ADP + H(+). Functionally, catalyzes the phosphorylation of pseudouridine to pseudouridine 5'-phosphate (PsiMP). This is Pseudouridine kinase (psuK) from Escherichia coli (strain K12).